We begin with the raw amino-acid sequence, 61 residues long: Large ribosomal subunit protein bL32 (61 aa).

A disordered region spans residues 1-22 (MAVPKQKSSKSRGRKRRTHQKV). The segment covering 7 to 20 (KSSKSRGRKRRTHQ) has biased composition (basic residues).

This sequence belongs to the bacterial ribosomal protein bL32 family.

The polypeptide is Large ribosomal subunit protein bL32 (Desulforapulum autotrophicum (strain ATCC 43914 / DSM 3382 / VKM B-1955 / HRM2) (Desulfobacterium autotrophicum)).